The primary structure comprises 479 residues: Adenosylhomocysteinase (479 aa).

Substrate-binding residues include T65, D144, and E204. 205–207 (TTT) is an NAD(+) binding site. Substrate contacts are provided by K234 and D238. Residues N239, 268–273 (GYGDVG), E291, N326, 347–349 (IGH), and N392 each bind NAD(+).

Belongs to the adenosylhomocysteinase family. It depends on NAD(+) as a cofactor.

Its subcellular location is the cytoplasm. The enzyme catalyses S-adenosyl-L-homocysteine + H2O = L-homocysteine + adenosine. It functions in the pathway amino-acid biosynthesis; L-homocysteine biosynthesis; L-homocysteine from S-adenosyl-L-homocysteine: step 1/1. Its function is as follows. May play a key role in the regulation of the intracellular concentration of adenosylhomocysteine. The protein is Adenosylhomocysteinase of Variovorax paradoxus (strain S110).